Consider the following 106-residue polypeptide: UPF0060 membrane protein Bxeno_B1021 (106 aa).

4 helical membrane-spanning segments follow: residues 2–22 (KTFL…YLPW), 30–50 (SIWL…LLTL), 58–78 (VYAA…WCVD), and 82–102 (PTLW…IIAF).

Belongs to the UPF0060 family.

It is found in the cell inner membrane. This Paraburkholderia xenovorans (strain LB400) protein is UPF0060 membrane protein Bxeno_B1021.